A 534-amino-acid chain; its full sequence is Zinc finger protein 69 homolog B (534 aa).

Glycyl lysine isopeptide (Lys-Gly) (interchain with G-Cter in SUMO2) cross-links involve residues K37 and K40. Positions 74 to 145 (LTFKDVSVDF…ERDISGVPSS (72 aa)) constitute a KRAB domain. Residues K178 and K235 each participate in a glycyl lysine isopeptide (Lys-Gly) (interchain with G-Cter in SUMO2) cross-link. C2H2-type zinc fingers lie at residues 279–301 (FECN…MRIH), 307–329 (FRCK…QRIH), 335–357 (YECK…VRIH), 363–385 (YECR…LRTH), 391–413 (FTCK…EIIH), 419–441 (YICN…QRTH), 447–469 (YKCK…QRVH), 475–497 (YECS…QRIH), and 503–525 (YDCN…CKTH).

This sequence belongs to the krueppel C2H2-type zinc-finger protein family.

The protein resides in the nucleus. In terms of biological role, may be involved in transcriptional regulation. Essential for Golgi structural integrity. The chain is Zinc finger protein 69 homolog B (ZFP69B) from Homo sapiens (Human).